We begin with the raw amino-acid sequence, 165 residues long: Interferon gamma (165 aa).

An N-terminal signal peptide occupies residues 1–23 (MKYTSYILAFQLCIVLGSLGCYC). Residue Gln-24 is modified to Pyrrolidone carboxylic acid. N-linked (GlcNAc...) asparagine glycosylation is found at Asn-48 and Asn-120.

The protein belongs to the type II (or gamma) interferon family. As to quaternary structure, homodimer. Interacts with IFNGR1 (via extracellular domain); this interaction promotes IFNGR1 dimerization. Released primarily from activated T lymphocytes.

It is found in the secreted. Functionally, type II interferon produced by immune cells such as T-cells and NK cells that plays crucial roles in antimicrobial, antiviral, and antitumor responses by activating effector immune cells and enhancing antigen presentation. Primarily signals through the JAK-STAT pathway after interaction with its receptor IFNGR1 to affect gene regulation. Upon IFNG binding, IFNGR1 intracellular domain opens out to allow association of downstream signaling components JAK2, JAK1 and STAT1, leading to STAT1 activation, nuclear translocation and transcription of IFNG-regulated genes. Many of the induced genes are transcription factors such as IRF1 that are able to further drive regulation of a next wave of transcription. Plays a role in class I antigen presentation pathway by inducing a replacement of catalytic proteasome subunits with immunoproteasome subunits. In turn, increases the quantity, quality, and repertoire of peptides for class I MHC loading. Increases the efficiency of peptide generation also by inducing the expression of activator PA28 that associates with the proteasome and alters its proteolytic cleavage preference. Up-regulates as well MHC II complexes on the cell surface by promoting expression of several key molecules such as cathepsins B/CTSB, H/CTSH, and L/CTSL. Participates in the regulation of hematopoietic stem cells during development and under homeostatic conditions by affecting their development, quiescence, and differentiation. This chain is Interferon gamma (IFNG), found in Cercocebus atys (Sooty mangabey).